The following is an 860-amino-acid chain: Protein argonaute-3 (860 aa).

Residues 230–349 form the PAZ domain; that stretch reads PVIQFMCEVL…LPLEVCNIVA (120 aa). Residues 518-819 form the Piwi domain; it reads LIIVILPGKT…VAFRARYHLV (302 aa). Positions 530–567 are interaction with guide RNA; the sequence is YAEVKRVGDTLLGMATQCVQVKNVVKTSPQTLSNLCLK. Positions 598, 638, and 670 each coordinate a divalent metal cation. An interaction with guide RNA region spans residues 758–805; sequence QGTSRPSHYYVLWDDNCFTADEFQLLTYQLCHTYVRCTRSVSIPAPAY. An a divalent metal cation-binding site is contributed by H808.

Belongs to the argonaute family. Ago subfamily.

It localises to the cytoplasm. Its subcellular location is the P-body. It catalyses the reaction Endonucleolytic cleavage to 5'-phosphomonoester.. Its function is as follows. Required for RNA-mediated gene silencing (RNAi). Binds to short RNAs such as microRNAs (miRNAs) and represses the translation of mRNAs which are complementary to them. Possesses RNA slicer activity but only on select RNAs bearing 5'- and 3'-flanking sequences to the region of guide-target complementarity. This is Protein argonaute-3 (ago3) from Danio rerio (Zebrafish).